The primary structure comprises 101 residues: Small ribosomal subunit protein uS14 (101 aa).

This sequence belongs to the universal ribosomal protein uS14 family. Part of the 30S ribosomal subunit. Contacts proteins S3 and S10.

In terms of biological role, binds 16S rRNA, required for the assembly of 30S particles and may also be responsible for determining the conformation of the 16S rRNA at the A site. The sequence is that of Small ribosomal subunit protein uS14 from Pseudomonas syringae pv. syringae (strain B728a).